We begin with the raw amino-acid sequence, 367 residues long: Cobalt-precorrin-5B C(1)-methyltransferase (367 aa).

It belongs to the CbiD family.

The enzyme catalyses Co-precorrin-5B + S-adenosyl-L-methionine = Co-precorrin-6A + S-adenosyl-L-homocysteine. It participates in cofactor biosynthesis; adenosylcobalamin biosynthesis; cob(II)yrinate a,c-diamide from sirohydrochlorin (anaerobic route): step 6/10. Functionally, catalyzes the methylation of C-1 in cobalt-precorrin-5B to form cobalt-precorrin-6A. This chain is Cobalt-precorrin-5B C(1)-methyltransferase, found in Leptospira interrogans serogroup Icterohaemorrhagiae serovar copenhageni (strain Fiocruz L1-130).